A 345-amino-acid chain; its full sequence is MDTLTLPRPDDWHLHLRDGALMQAVAPQAAAVFSRAIIMPNLQPPVTTVEQAAAYRQRILGALPAGSTFEPLMTLYLTDKTSPEEIVRAAASGFVHAVKLYPAGATTHSDAGVTDLLLCYDALAAMEEQGLPLLIHGERTGPELDIFERETAFIDDVLQPLLDRHPRLKVVLEHVTTAVGAELVTGDDPRLAGTFTPQHLLYNRNDLLVGGLKPHYYCMPILKREADREALLEAATSGHPRVFLGTDSAPHPRGAKESACGCAGCYTAPIALSLYAEAFEAAGALERLADFAGRNGPAFYGLPVNPETVTLERAPLEVPASYPGGDEPVVPLRAGESLAWRLHQP.

The Zn(2+) site is built by histidine 13 and histidine 15. Substrate contacts are provided by residues 15-17 (HLR) and asparagine 41. 4 residues coordinate Zn(2+): lysine 99, histidine 136, histidine 174, and aspartate 247. N6-carboxylysine is present on lysine 99. Histidine 136 contributes to the substrate binding site. The active site involves aspartate 247. Substrate contacts are provided by histidine 251 and alanine 263.

The protein belongs to the metallo-dependent hydrolases superfamily. DHOase family. Class II DHOase subfamily. Homodimer. Zn(2+) serves as cofactor.

The enzyme catalyses (S)-dihydroorotate + H2O = N-carbamoyl-L-aspartate + H(+). It functions in the pathway pyrimidine metabolism; UMP biosynthesis via de novo pathway; (S)-dihydroorotate from bicarbonate: step 3/3. Functionally, catalyzes the reversible cyclization of carbamoyl aspartate to dihydroorotate. The polypeptide is Dihydroorotase (Halorhodospira halophila (strain DSM 244 / SL1) (Ectothiorhodospira halophila (strain DSM 244 / SL1))).